The chain runs to 275 residues: Uridine-5'-phosphate dioxygenase (275 aa).

The Fe cation site is built by His-105, Asp-107, and His-247.

Fe(2+) serves as cofactor.

The enzyme catalyses UMP + 2-oxoglutarate + O2 = uridine-5'-aldehyde + succinate + phosphate + CO2. Its pathway is antibiotic biosynthesis. With respect to regulation, enhanced by ascorbic acid and inhibited by Zn(2+). Functionally, dioxygenase involved in the biosynthesis of the capuramycin-type nucleoside antibiotic A-102395. Catalyzes the dephosphorylation and oxidation of UMP to generate uridine-5'-aldehyde. Can also use the alternative alpha-keto acids pyruvate and alpha-ketoadipate (2-oxoadipate), with very low efficiency. Cannot use alpha-ketobutyrate, alpha-ketovalerate and oxaloacetate. The protein is Uridine-5'-phosphate dioxygenase of Amycolatopsis sp.